Here is a 583-residue protein sequence, read N- to C-terminus: SHC-transforming protein 1 (583 aa).

An N-acetylmethionine modification is found at Met1. Disordered regions lie at residues 1 to 92 (MDLL…DDGE) and 113 to 137 (KLSG…WTRH). Residues 16-44 (ESLSSLEEGASGSTPPEELPSPSASSLGP) show a composition bias toward low complexity. Ser36 is subject to Phosphoserine. A Phosphoserine modification is found at Ser139. N6-acetyllysine is present on Lys154. The region spanning 156-339 (MGPGVSYLVR…AGFDGSAWDE (184 aa)) is the PID domain. Residues 340–487 (EEEEPPDHQY…SMAEQLRGEP (148 aa)) form a CH1 region. 2 positions are modified to phosphotyrosine: Tyr349 and Tyr350. Positions 372–416 (AAPGAARSTAPSAQTPSHLGATLPVGQPVGGDPEVRKQMPPPPPC) are disordered. Tyr427 is modified (phosphotyrosine). Position 453 is a phosphoserine (Ser453). The region spanning 488 to 579 (WFHGKLSRRE…GSELCLQQPV (92 aa)) is the SH2 domain.

Interacts with CPNE3; this interaction may mediate the binding of CPNE3 with ERBB2. Interacts with the Trk receptors NTRK1, NTRK2 and NTRK3; in a phosphotyrosine-dependent manner. Interacts with the NPXY motif of tyrosine-phosphorylated IGF1R and INSR in vitro via the PID domain. Once activated, binds to GRB2. Interacts with tyrosine-phosphorylated CD3T and DDR2. Interacts with the N-terminal region of APS. Interacts with phosphorylated LRP1 and IRS4. Interacts with INPP5D/SHIP1 and INPPL1/SHIP2. Interacts with ALK, GAB2, GRB7 and KIT. Interacts with PTPN6/SHP (tyrosine phosphorylated). Identified in a complex containing FGFR4, NCAM1, CDH2, PLCG1, FRS2, SRC, SHC1, GAP43 and CTTN. Interacts with FLT4 (tyrosine-phosphorylated). Interacts with EPHB1 and GRB2; activates the MAPK/ERK cascade to regulate cell migration. Interacts with PDGFRB (tyrosine-phosphorylated). Interacts with ERBB4. Interacts with TEK/TIE2 (tyrosine-phosphorylated). Interacts with PTK2/FAK1. Interacts with CEACAM1; this interaction is CEACAM1-phosphorylation-dependent and mediates interaction with EGFR or INSR resulting in decrease coupling of SHC1 to the MAPK3/ERK1-MAPK1/ERK2 pathway. Interacts (via PID domain) with PEAK1 (when phosphorylated). Found in a complex with PPP1CA, PPP1CC, SHC1 and PEAK1. In terms of processing, phosphorylated by activated epidermal growth factor receptor. Phosphorylated in response to KIT signaling. Tyrosine phosphorylated in response to FLT3 and FLT4 signaling and by ligand-activated ALK. Tyrosine phosphorylated by ligand-activated PDGFRB. Tyrosine phosphorylated by TEK/TIE2. May be tyrosine phosphorylated by activated PTK2/FAK1. Tyrosine phosphorylated by activated PTK2B/PYK2. Dephosphorylation by PTPN2 may regulate interaction with GRB2.

It is found in the cytoplasm. Its subcellular location is the cell junction. It localises to the focal adhesion. Signaling adapter that couples activated growth factor receptors to signaling pathways. Participates in a signaling cascade initiated by activated KIT and KITLG/SCF. Participates in signaling downstream of the angiopoietin receptor TEK/TIE2, and plays a role in the regulation of endothelial cell migration and sprouting angiogenesis. In Pongo abelii (Sumatran orangutan), this protein is SHC-transforming protein 1 (SHC1).